The sequence spans 88 residues: UPF0213 protein SAG0778 (88 aa).

The GIY-YIG domain maps to 4-80; that stretch reads VPAYMYVLEC…QKTRQAKLTY (77 aa).

It belongs to the UPF0213 family.

In Streptococcus agalactiae serotype V (strain ATCC BAA-611 / 2603 V/R), this protein is UPF0213 protein SAG0778.